Here is a 256-residue protein sequence, read N- to C-terminus: LexA repressor (256 aa).

A disordered region spans residues 1-31 (MTSQGRGTRRGGTRGNVRAFPEGPTDAGLTP). The H-T-H motif DNA-binding region spans 53–73 (VREIGEAVGLTSTSSVAHQLK). Catalysis depends on for autocatalytic cleavage activity residues Ser-180 and Lys-217.

The protein belongs to the peptidase S24 family. Homodimer.

It carries out the reaction Hydrolysis of Ala-|-Gly bond in repressor LexA.. Its function is as follows. Represses a number of genes involved in the response to DNA damage (SOS response), including recA and lexA. In the presence of single-stranded DNA, RecA interacts with LexA causing an autocatalytic cleavage which disrupts the DNA-binding part of LexA, leading to derepression of the SOS regulon and eventually DNA repair. The protein is LexA repressor of Frankia casuarinae (strain DSM 45818 / CECT 9043 / HFP020203 / CcI3).